Reading from the N-terminus, the 368-residue chain is Ribosomal RNA large subunit methyltransferase M (368 aa).

S-adenosyl-L-methionine-binding positions include Ser-189, 222–225 (CPGG), Asp-241, Asp-261, and Asp-278. Lys-307 (proton acceptor) is an active-site residue.

This sequence belongs to the class I-like SAM-binding methyltransferase superfamily. RNA methyltransferase RlmE family. RlmM subfamily. As to quaternary structure, monomer.

It is found in the cytoplasm. The enzyme catalyses cytidine(2498) in 23S rRNA + S-adenosyl-L-methionine = 2'-O-methylcytidine(2498) in 23S rRNA + S-adenosyl-L-homocysteine + H(+). In terms of biological role, catalyzes the 2'-O-methylation at nucleotide C2498 in 23S rRNA. The chain is Ribosomal RNA large subunit methyltransferase M from Yersinia enterocolitica serotype O:8 / biotype 1B (strain NCTC 13174 / 8081).